Here is a 100-residue protein sequence, read N- to C-terminus: Small ribosomal subunit protein uS14 (100 aa).

The protein belongs to the universal ribosomal protein uS14 family. Part of the 30S ribosomal subunit. Contacts proteins S3 and S10.

Binds 16S rRNA, required for the assembly of 30S particles and may also be responsible for determining the conformation of the 16S rRNA at the A site. The polypeptide is Small ribosomal subunit protein uS14 (Prochlorococcus marinus (strain MIT 9313)).